Consider the following 64-residue polypeptide: Large ribosomal subunit protein bL33 (64 aa).

It belongs to the bacterial ribosomal protein bL33 family.

The chain is Large ribosomal subunit protein bL33 from Nostoc punctiforme (strain ATCC 29133 / PCC 73102).